The primary structure comprises 250 residues: Keratin-associated protein 9-1 (250 aa).

32 repeat units span residues 8–12, 13–17, 18–22, 37–41, 42–46, 51–55, 56–60, 61–65, 66–70, 75–79, 80–84, 85–89, 90–94, 95–99, 105–109, 114–117, 118–121, 133–137, 138–142, 143–147, 153–157, 162–166, 167–171, 176–180, 185–189, 190–194, 214–218, 219–223, 229–233, 234–238, 239–243, and 244–248. A 32 X 5 AA repeats of C-C-[CGSVRQH]-[SQTNP]-[PTSI] region spans residues 8–248; sequence CCQPTCCRTT…CCVSSCCQPS (241 aa).

It belongs to the KRTAP type 9 family. In terms of assembly, interacts with hair keratins.

Its function is as follows. In the hair cortex, hair keratin intermediate filaments are embedded in an interfilamentous matrix, consisting of hair keratin-associated proteins (KRTAP), which are essential for the formation of a rigid and resistant hair shaft through their extensive disulfide bond cross-linking with abundant cysteine residues of hair keratins. The matrix proteins include the high-sulfur and high-glycine-tyrosine keratins. This is Keratin-associated protein 9-1 from Homo sapiens (Human).